Reading from the N-terminus, the 127-residue chain is UPF0102 protein ERGA_CDS_00540 (127 aa).

It belongs to the UPF0102 family.

The polypeptide is UPF0102 protein ERGA_CDS_00540 (Ehrlichia ruminantium (strain Gardel)).